Reading from the N-terminus, the 372-residue chain is MDHIELISSPLDITTLYTLLGDPGCGASSVFVGTTRDSFEGKKVLSLEYEAYEPMAIKEMKTICTDLRAKWPDLKHIVIYHRLGSVPVGEASVVIATSAPHRLSALESVSLAVDQLKTRVPIWKKELYEGDDPAQWKENKESLRPKHSQVTSNRFNFATCKIEKQNENISDKLVQIRVHDDELSKRVECFVRRKRMEINMLNVRDFTQNQSLPHVLNNEEAEVSCARTQGAVIKQEQSNCHLKVRRVNNKSGPQQMHLRPNYAQELNKLMGSSESSCDPSGQVQNDLANNRLRTIESYMGLSANNQSLLSRLKQVENRILLLESTSPEYNHFTNNLKQPDSEEPSPKRLKRKIYCAEELNNLLKSFKDETGS.

Residues 101-102 (HR), Lys117, and 124-126 (KKE) each bind substrate.

Belongs to the MoaE family. MOCS2B subfamily. In terms of assembly, heterotetramer; composed of 2 small (Mocs2A) and 2 large (Mocs2B) subunits.

It localises to the cytoplasm. The catalysed reaction is 2 [molybdopterin-synthase sulfur-carrier protein]-C-terminal-Gly-aminoethanethioate + cyclic pyranopterin phosphate + H2O = molybdopterin + 2 [molybdopterin-synthase sulfur-carrier protein]-C-terminal Gly-Gly + 2 H(+). Its pathway is cofactor biosynthesis; molybdopterin biosynthesis. Catalytic subunit of the molybdopterin synthase complex, a complex that catalyzes the conversion of precursor Z into molybdopterin. Acts by mediating the incorporation of 2 sulfur atoms from thiocarboxylated Mocs2A into precursor Z to generate a dithiolene group. The chain is Molybdopterin synthase catalytic subunit from Drosophila willistoni (Fruit fly).